The primary structure comprises 245 residues: Biosynthetic peptidoglycan transglycosylase (245 aa).

The chain crosses the membrane as a helical span at residues Val-20–Ala-42.

Belongs to the glycosyltransferase 51 family.

It is found in the cell inner membrane. The catalysed reaction is [GlcNAc-(1-&gt;4)-Mur2Ac(oyl-L-Ala-gamma-D-Glu-L-Lys-D-Ala-D-Ala)](n)-di-trans,octa-cis-undecaprenyl diphosphate + beta-D-GlcNAc-(1-&gt;4)-Mur2Ac(oyl-L-Ala-gamma-D-Glu-L-Lys-D-Ala-D-Ala)-di-trans,octa-cis-undecaprenyl diphosphate = [GlcNAc-(1-&gt;4)-Mur2Ac(oyl-L-Ala-gamma-D-Glu-L-Lys-D-Ala-D-Ala)](n+1)-di-trans,octa-cis-undecaprenyl diphosphate + di-trans,octa-cis-undecaprenyl diphosphate + H(+). It functions in the pathway cell wall biogenesis; peptidoglycan biosynthesis. Functionally, peptidoglycan polymerase that catalyzes glycan chain elongation from lipid-linked precursors. The protein is Biosynthetic peptidoglycan transglycosylase of Burkholderia orbicola (strain MC0-3).